The primary structure comprises 142 residues: Pre-mRNA-splicing factor cwf18 (142 aa).

A compositionally biased stretch (basic and acidic residues) spans Leu24–Asp45. The tract at residues Leu24–Gly54 is disordered.

Belongs to the 40S cdc5-associated complex (or cwf complex), a spliceosome sub-complex reminiscent of a late-stage spliceosome composed of the U2, U5 and U6 snRNAs and at least brr2, cdc5, cwf2/prp3, cwf3/syf1, cwf4/syf3, cwf5/ecm2, spp42/cwf6, cwf7/spf27, cwf8, cwf9, cwf10, cwf11, cwf12, prp45/cwf13, cwf14, cwf15, cwf16, cwf17, cwf18, cwf19, cwf20, cwf21, cwf22, cwf23, cwf24, cwf25, cwf26, cyp7/cwf27, cwf28, cwf29/ist3, lea1, msl1, prp5/cwf1, prp10, prp12/sap130, prp17, prp22, sap61, sap62, sap114, sap145, slu7, smb1, smd1, smd3, smf1, smg1 and syf2.

It is found in the nucleus. Its function is as follows. Involved in mRNA splicing where it associates with cdc5 and the other cwf proteins as part of the spliceosome. The chain is Pre-mRNA-splicing factor cwf18 (cwf18) from Schizosaccharomyces pombe (strain 972 / ATCC 24843) (Fission yeast).